A 128-amino-acid chain; its full sequence is Large ribosomal subunit protein bL19 (128 aa).

The protein belongs to the bacterial ribosomal protein bL19 family.

Functionally, this protein is located at the 30S-50S ribosomal subunit interface and may play a role in the structure and function of the aminoacyl-tRNA binding site. The protein is Large ribosomal subunit protein bL19 of Janthinobacterium sp. (strain Marseille) (Minibacterium massiliensis).